Here is a 785-residue protein sequence, read N- to C-terminus: uncharacterized protein (785 aa).

Over residues 53–65 (KNTLTGSHGSNDL) the composition is skewed to polar residues. Residues 53 to 162 (KNTLTGSHGS…RKAADEQGPI (110 aa)) form a disordered region. The span at 66 to 79 (ATDESLDSPEDEEA) shows a compositional bias: acidic residues. A compositionally biased stretch (polar residues) spans 81–94 (SPLQLGTPTSTTSG). At Ser-215 the chain carries Phosphoserine. Disordered regions lie at residues 571 to 590 (KVVDSDDEESDSDESVTSVN) and 631 to 657 (DSSGRKLTPIESRNSRRSSKRSSRIQF). The span at 575-584 (SDDEESDSDE) shows a compositional bias: acidic residues. Residue Ser-667 is modified to Phosphoserine. Positions 693-785 (DPKMKFTSHP…FGSIFKKVFG (93 aa)) are disordered. The segment covering 725-739 (RKAHHHHHHHNHVSR) has biased composition (basic residues). Over residues 776 to 785 (FGSIFKKVFG) the composition is skewed to low complexity.

This is an uncharacterized protein from Saccharomyces cerevisiae (strain ATCC 204508 / S288c) (Baker's yeast).